Consider the following 608-residue polypeptide: UvrABC system protein C (608 aa).

The 79-residue stretch at 16–94 (NRPGVYRMFD…IKEWRPPYNI (79 aa)) folds into the GIY-YIG domain. The region spanning 204–239 (NALADELNVGMEQAAMRLDFEKAAELRDQVAILRRV) is the UVR domain.

It belongs to the UvrC family. In terms of assembly, interacts with UvrB in an incision complex.

Its subcellular location is the cytoplasm. In terms of biological role, the UvrABC repair system catalyzes the recognition and processing of DNA lesions. UvrC both incises the 5' and 3' sides of the lesion. The N-terminal half is responsible for the 3' incision and the C-terminal half is responsible for the 5' incision. The polypeptide is UvrABC system protein C (Pseudomonas aeruginosa (strain LESB58)).